A 579-amino-acid polypeptide reads, in one-letter code: Chromosomal replication initiator protein DnaA (579 aa).

The interval 1–71 (MQDFWQAAAA…TALACEYWET (71 aa)) is domain I, interacts with DnaA modulators. The interval 71 to 242 (TQVSVHFVLD…QQSDTVHERS (172 aa)) is domain II. Disordered regions lie at residues 131–196 (AGAQ…SAAH) and 212–240 (EASARSYRVPSPQPAAPAGAQQQSDTVHE). Positions 171 to 183 (SQSQQSAQGRGAA) are enriched in low complexity. A domain III, AAA+ region region spans residues 243–459 (RLNPILTFDN…GALRKILAFS (217 aa)). Residues G287, G289, K290, and T291 each contribute to the ATP site. Positions 460 to 579 (NFHGKDITID…LHVLEQTLKG (120 aa)) are domain IV, binds dsDNA.

Belongs to the DnaA family. As to quaternary structure, oligomerizes as a right-handed, spiral filament on DNA at oriC.

It localises to the cytoplasm. Plays an essential role in the initiation and regulation of chromosomal replication. ATP-DnaA binds to the origin of replication (oriC) to initiate formation of the DNA replication initiation complex once per cell cycle. Binds the DnaA box (a 9 base pair repeat at the origin) and separates the double-stranded (ds)DNA. Forms a right-handed helical filament on oriC DNA; dsDNA binds to the exterior of the filament while single-stranded (ss)DNA is stabiized in the filament's interior. The ATP-DnaA-oriC complex binds and stabilizes one strand of the AT-rich DNA unwinding element (DUE), permitting loading of DNA polymerase. After initiation quickly degrades to an ADP-DnaA complex that is not apt for DNA replication. Binds acidic phospholipids. This Cupriavidus metallidurans (strain ATCC 43123 / DSM 2839 / NBRC 102507 / CH34) (Ralstonia metallidurans) protein is Chromosomal replication initiator protein DnaA.